Reading from the N-terminus, the 114-residue chain is T cell receptor beta variable 9 (114 aa).

The N-terminal stretch at Met1 to Ser21 is a signal peptide. The Ig-like domain occupies Gly22–Val114. Cys42 and Cys110 form a disulfide bridge. N-linked (GlcNAc...) asparagine glycosylation occurs at Asn96.

In terms of assembly, alpha-beta TR is a heterodimer composed of an alpha and beta chain; disulfide-linked. The alpha-beta TR is associated with the transmembrane signaling CD3 coreceptor proteins to form the TR-CD3 (TcR or TCR). The assembly of alpha-beta TR heterodimers with CD3 occurs in the endoplasmic reticulum where a single alpha-beta TR heterodimer associates with one CD3D-CD3E heterodimer, one CD3G-CD3E heterodimer and one CD247 homodimer forming a stable octameric structure. CD3D-CD3E and CD3G-CD3E heterodimers preferentially associate with TR alpha and TR beta chains, respectively. The association of the CD247 homodimer is the last step of TcR assembly in the endoplasmic reticulum and is required for transport to the cell surface.

Its subcellular location is the cell membrane. Functionally, v region of the variable domain of T cell receptor (TR) beta chain that participates in the antigen recognition. Alpha-beta T cell receptors are antigen specific receptors which are essential to the immune response and are present on the cell surface of T lymphocytes. Recognize peptide-major histocompatibility (MH) (pMH) complexes that are displayed by antigen presenting cells (APC), a prerequisite for efficient T cell adaptive immunity against pathogens. Binding of alpha-beta TR to pMH complex initiates TR-CD3 clustering on the cell surface and intracellular activation of LCK that phosphorylates the ITAM motifs of CD3G, CD3D, CD3E and CD247 enabling the recruitment of ZAP70. In turn ZAP70 phosphorylates LAT, which recruits numerous signaling molecules to form the LAT signalosome. The LAT signalosome propagates signal branching to three major signaling pathways, the calcium, the mitogen-activated protein kinase (MAPK) kinase and the nuclear factor NF-kappa-B (NF-kB) pathways, leading to the mobilization of transcription factors that are critical for gene expression and essential for T cell growth and differentiation. The T cell repertoire is generated in the thymus, by V-(D)-J rearrangement. This repertoire is then shaped by intrathymic selection events to generate a peripheral T cell pool of self-MH restricted, non-autoaggressive T cells. Post-thymic interaction of alpha-beta TR with the pMH complexes shapes TR structural and functional avidity. This chain is T cell receptor beta variable 9, found in Homo sapiens (Human).